A 115-amino-acid polypeptide reads, in one-letter code: MRLYINEIKIKDDTLYCYTEDTIKGLSEVGQMLVDSDNYAFAYTLDDGKAYAYLIFVQETWTMLHENMTKKIIINDELELTEFHQELTYILDNIKGNNNYGKEFVATVEETFDIE.

It belongs to the UPF0738 family.

The protein is UPF0738 protein SAB0871 of Staphylococcus aureus (strain bovine RF122 / ET3-1).